The primary structure comprises 183 residues: NRR repressor homolog 1 (183 aa).

Disordered stretches follow at residues 1 to 40 (MEGV…VVGG) and 66 to 183 (NGEE…PTDQ). Residues 31-40 (EEEEGAVVGG) are compositionally biased toward acidic residues. Positions 70–79 (GAAGGDGDGA) are enriched in gly residues. Residues 101 to 115 (FEFEEAAAGAGDDDA) show a composition bias toward acidic residues. The span at 135-145 (AVEKRRTEKEA) shows a compositional bias: basic and acidic residues. Acidic residues predominate over residues 150-161 (AEDDDDEQEGGE). A compositionally biased stretch (basic and acidic residues) spans 163–183 (VEGKEEHRPGRRVEAHGPTDQ).

This sequence belongs to the NPR1-interactor family. As to quaternary structure, interacts with NPR1/NH1. Interacts with NPR3/NH3.

Its subcellular location is the nucleus. In terms of biological role, binds to and represses NPR1/NH1-mediated transcriptional activation of LG2 in vitro. The chain is NRR repressor homolog 1 from Oryza sativa subsp. japonica (Rice).